Consider the following 218-residue polypeptide: MSRSYYRTRIKFCGMTRAGDVRLAGELGVDAVGFIFARESSRRVAPAEARAMRQAIAPMVDVVALFRNNSKEEVREVLRTVRPTLLQFHGEEDESFCRSFNMPYLKAIAMGGREEVNARTLQLRYPSAAGFLFDSHAPGGGGGTGVAFDWGRIPTGLHRPFLLAGGLNPENVYDAVLATLPWGVDVSSGIELEPGIKDGYRMRTFVEEVRRADCTVLE.

This sequence belongs to the TrpF family.

The enzyme catalyses N-(5-phospho-beta-D-ribosyl)anthranilate = 1-(2-carboxyphenylamino)-1-deoxy-D-ribulose 5-phosphate. It participates in amino-acid biosynthesis; L-tryptophan biosynthesis; L-tryptophan from chorismate: step 3/5. In Stenotrophomonas maltophilia (strain K279a), this protein is N-(5'-phosphoribosyl)anthranilate isomerase.